The primary structure comprises 201 residues: Glycerol-3-phosphate acyltransferase (201 aa).

Helical transmembrane passes span 9–29, 60–80, 86–106, 116–136, and 153–173; these read LTLI…FGLI, LAAA…LVAS, AAIG…WIGF, LGVL…VWIV, and IVVP…LFAI.

Belongs to the PlsY family. As to quaternary structure, probably interacts with PlsX.

The protein localises to the cell inner membrane. It carries out the reaction an acyl phosphate + sn-glycerol 3-phosphate = a 1-acyl-sn-glycero-3-phosphate + phosphate. It functions in the pathway lipid metabolism; phospholipid metabolism. Functionally, catalyzes the transfer of an acyl group from acyl-phosphate (acyl-PO(4)) to glycerol-3-phosphate (G3P) to form lysophosphatidic acid (LPA). This enzyme utilizes acyl-phosphate as fatty acyl donor, but not acyl-CoA or acyl-ACP. The chain is Glycerol-3-phosphate acyltransferase from Brucella anthropi (strain ATCC 49188 / DSM 6882 / CCUG 24695 / JCM 21032 / LMG 3331 / NBRC 15819 / NCTC 12168 / Alc 37) (Ochrobactrum anthropi).